The following is a 317-amino-acid chain: Methionyl-tRNA formyltransferase (317 aa).

110-113 (SLLP) serves as a coordination point for (6S)-5,6,7,8-tetrahydrofolate.

The protein belongs to the Fmt family.

The enzyme catalyses L-methionyl-tRNA(fMet) + (6R)-10-formyltetrahydrofolate = N-formyl-L-methionyl-tRNA(fMet) + (6S)-5,6,7,8-tetrahydrofolate + H(+). Its function is as follows. Attaches a formyl group to the free amino group of methionyl-tRNA(fMet). The formyl group appears to play a dual role in the initiator identity of N-formylmethionyl-tRNA by promoting its recognition by IF2 and preventing the misappropriation of this tRNA by the elongation apparatus. The polypeptide is Methionyl-tRNA formyltransferase (Lactiplantibacillus plantarum (strain ATCC BAA-793 / NCIMB 8826 / WCFS1) (Lactobacillus plantarum)).